Reading from the N-terminus, the 124-residue chain is Protein MGF 110-4L (124 aa).

The signal sequence occupies residues 1-18 (MLVIFLGILGLLANQVLG). Asparagine 64 carries an N-linked (GlcNAc...) asparagine; by host glycan. The Prevents secretion from ER signature appears at 121-124 (KEDL).

This sequence belongs to the asfivirus MGF 110 family.

The protein localises to the virion. It localises to the host endoplasmic reticulum-Golgi intermediate compartment. Its function is as follows. Causes the redistribution of lumenal ER protein to an enlarged ERGIC compartment. The polypeptide is Protein MGF 110-4L (Ornithodoros (relapsing fever ticks)).